A 400-amino-acid chain; its full sequence is PHD finger protein 24 (400 aa).

Residue G2 is the site of N-myristoyl glycine attachment. Over residues 28–38 (LRDRPSIRRTG) the composition is skewed to basic and acidic residues. The segment at 28–99 (LRDRPSIRRT…PEEFDRTSRF (72 aa)) is disordered. At R36 the chain carries Omega-N-methylarginine. S43 bears the Phosphoserine mark. The residue at position 47 (T47) is a Phosphothreonine. S51 is modified (phosphoserine). Residues 78–97 (AWERLRDGRGVEPEEFDRTS) show a composition bias toward basic and acidic residues. The PHD-type zinc finger occupies 129 to 190 (NDEMCDVCEV…TGWSCHYCDN (62 aa)).

The chain is PHD finger protein 24 from Homo sapiens (Human).